The following is a 138-amino-acid chain: Putative pre-16S rRNA nuclease (138 aa).

It belongs to the YqgF nuclease family.

It is found in the cytoplasm. Could be a nuclease involved in processing of the 5'-end of pre-16S rRNA. This chain is Putative pre-16S rRNA nuclease, found in Caldicellulosiruptor saccharolyticus (strain ATCC 43494 / DSM 8903 / Tp8T 6331).